A 1062-amino-acid chain; its full sequence is MPKRTDIHKIMVIGSGPIIIGQAAEFDYSGTQACLALRDEGYEVVLVNSNPATIMTDTTIADKVYIEPLTVDSVSRIIRQEYPDAILPTLGGQVGLNMALALAKTGILDELHIELLGTKLASIEQAEDREKFKELCQKLGEPVPPSKTVKIVEDALAFGDEIGYPIIVRPAFTMGGTGGGICHNHDELAEIAKNGLELSPVTECLIEKSIAGYKEIEFEVMRDSSDNAMIVCCMENFDPVGIHTGDSIVFSPSQTLSDKEYQMLRDCSLKLIRALKIEGGCNVQLALDPNSLDYDVIEVNPRVSRSSALASKATGYPIAKMAAKIAIGMTLDEIKNPVTGTTYAEFEPALDYVVCKIPRFPFDKFPKADRVLGTQMKATGEVMAIGRTAEEAMQKAVQSLEIDEKDLYSAKAHKASDDEIEQKLVRPQDDRLFYLAEAFRRGYSLEDVHELTKINFYFLDVVKHMVEMEKEIEANPDDLDVLRLAKKYGFSDQTIAKLWHEYPDQVRDLRKANGIVPVYKMVDTCAAEFESTTPYFYSTYDGENESRKSGKKSVIVIGSGPIRIGQGVEFDYATVHSVKALQKMGYEAIVINSNPETVSTDFSVSDKLYFEPLTLEDVLNVCDLEQPEGVIVQFGGQTSINLAAGLERHGVKILGTTVKDLDRAEDREEFDQIIKSLHLHQPQGLTATTHEGVMKAADQLGYPVLVRPSYVLGGKAMEIVYSKDELEEYLHDHADIAEDHPILVDDYLDGRECDVDAISDGKTVLLPGIMEHIEHAGVHSGDSMAVYPPQTFSDEVEEKITDVTKKLALALNCKGIMNIQFIVRDGDVYVIEVNPRASRTVPFLSKITGIEMAQVATRVIMGESLEQQGYADGLAPEPEMISVKAPVFSFSKLADVDSYLGPEMKSTGEVMGSDHTFAKALYKAFAGAKMQLPENGNVLLTIEDRDKEKILPIAKRFARIGYRIFATKGTANFLKKNDLHVELVTKVHEDEQADDNILNELRDGKIDLVINTMGHDIEKNSDGFIIRQMAIQQNVPLLTALDTADALLKSLENRSFATDALK.

Residues 1 to 401 form a carboxyphosphate synthetic domain region; sequence MPKRTDIHKI…AMQKAVQSLE (401 aa). ATP contacts are provided by R129, R169, G175, G176, K208, I210, E215, G241, I242, H243, Q284, and E298. In terms of domain architecture, ATP-grasp 1 spans 133 to 327; sequence KELCQKLGEP…IAKMAAKIAI (195 aa). Residues Q284, E298, and N300 each coordinate Mg(2+). Mn(2+)-binding residues include Q284, E298, and N300. An oligomerization domain region spans residues 402-546; it reads IDEKDLYSAK…YSTYDGENES (145 aa). The carbamoyl phosphate synthetic domain stretch occupies residues 547-929; it reads RKSGKKSVIV…ALYKAFAGAK (383 aa). Residues 671 to 861 enclose the ATP-grasp 2 domain; it reads DQIIKSLHLH…MAQVATRVIM (191 aa). The ATP site is built by R707, D746, L748, E752, G777, V778, H779, S780, Q820, and E832. Mg(2+)-binding residues include Q820, E832, and N834. Mn(2+)-binding residues include Q820, E832, and N834. The 133-residue stretch at 930–1062 folds into the MGS-like domain; the sequence is MQLPENGNVL…NRSFATDALK (133 aa). Residues 930–1062 form an allosteric domain region; the sequence is MQLPENGNVL…NRSFATDALK (133 aa).

The protein belongs to the CarB family. In terms of assembly, composed of two chains; the small (or glutamine) chain promotes the hydrolysis of glutamine to ammonia, which is used by the large (or ammonia) chain to synthesize carbamoyl phosphate. Tetramer of heterodimers (alpha,beta)4. Mg(2+) serves as cofactor. The cofactor is Mn(2+).

The catalysed reaction is hydrogencarbonate + L-glutamine + 2 ATP + H2O = carbamoyl phosphate + L-glutamate + 2 ADP + phosphate + 2 H(+). It catalyses the reaction hydrogencarbonate + NH4(+) + 2 ATP = carbamoyl phosphate + 2 ADP + phosphate + 2 H(+). Its pathway is amino-acid biosynthesis; L-arginine biosynthesis; carbamoyl phosphate from bicarbonate: step 1/1. It functions in the pathway pyrimidine metabolism; UMP biosynthesis via de novo pathway; (S)-dihydroorotate from bicarbonate: step 1/3. In terms of biological role, large subunit of the glutamine-dependent carbamoyl phosphate synthetase (CPSase). CPSase catalyzes the formation of carbamoyl phosphate from the ammonia moiety of glutamine, carbonate, and phosphate donated by ATP, constituting the first step of 2 biosynthetic pathways, one leading to arginine and/or urea and the other to pyrimidine nucleotides. The large subunit (synthetase) binds the substrates ammonia (free or transferred from glutamine from the small subunit), hydrogencarbonate and ATP and carries out an ATP-coupled ligase reaction, activating hydrogencarbonate by forming carboxy phosphate which reacts with ammonia to form carbamoyl phosphate. The protein is Carbamoyl phosphate synthase large chain of Lactobacillus delbrueckii subsp. bulgaricus (strain ATCC BAA-365 / Lb-18).